The primary structure comprises 586 residues: Membrane protein insertase YidC (586 aa).

Transmembrane regions (helical) follow at residues 5–25 (TLIG…LMAP), 371–391 (GVII…LTMA), 436–456 (LGGC…FYVF), 486–506 (IPLY…AVFF), and 522–542 (FMMY…PSGL).

It belongs to the OXA1/ALB3/YidC family. Type 1 subfamily. Interacts with the Sec translocase complex via SecD. Specifically interacts with transmembrane segments of nascent integral membrane proteins during membrane integration.

It localises to the cell inner membrane. In terms of biological role, required for the insertion and/or proper folding and/or complex formation of integral membrane proteins into the membrane. Involved in integration of membrane proteins that insert both dependently and independently of the Sec translocase complex, as well as at least some lipoproteins. Aids folding of multispanning membrane proteins. In Chloroherpeton thalassium (strain ATCC 35110 / GB-78), this protein is Membrane protein insertase YidC.